Consider the following 233-residue polypeptide: Large ribosomal subunit protein uL1 (233 aa).

Belongs to the universal ribosomal protein uL1 family. As to quaternary structure, part of the 50S ribosomal subunit.

Its function is as follows. Binds directly to 23S rRNA. The L1 stalk is quite mobile in the ribosome, and is involved in E site tRNA release. Protein L1 is also a translational repressor protein, it controls the translation of the L11 operon by binding to its mRNA. The chain is Large ribosomal subunit protein uL1 from Rhizobium etli (strain CIAT 652).